Here is a 119-residue protein sequence, read N- to C-terminus: Phosphoribosyl-AMP cyclohydrolase (119 aa).

Asp78 provides a ligand contact to Mg(2+). A Zn(2+)-binding site is contributed by Cys79. 2 residues coordinate Mg(2+): Asp80 and Asp82. Residues Cys95 and Cys102 each coordinate Zn(2+).

It belongs to the PRA-CH family. In terms of assembly, homodimer. Requires Mg(2+) as cofactor. Zn(2+) serves as cofactor.

It localises to the cytoplasm. The catalysed reaction is 1-(5-phospho-beta-D-ribosyl)-5'-AMP + H2O = 1-(5-phospho-beta-D-ribosyl)-5-[(5-phospho-beta-D-ribosylamino)methylideneamino]imidazole-4-carboxamide. The protein operates within amino-acid biosynthesis; L-histidine biosynthesis; L-histidine from 5-phospho-alpha-D-ribose 1-diphosphate: step 3/9. In terms of biological role, catalyzes the hydrolysis of the adenine ring of phosphoribosyl-AMP. The chain is Phosphoribosyl-AMP cyclohydrolase from Jannaschia sp. (strain CCS1).